Here is a 613-residue protein sequence, read N- to C-terminus: 9-cis-epoxycarotenoid dioxygenase NCED5, chloroplastic (613 aa).

Polar residues predominate over residues 1 to 15 (MPTTFTPNSPASSCS). A chloroplast-targeting transit peptide spans 1–36 (MPTTFTPNSPASSCSIHHRASPSRGARNSVRFTRPR). The disordered stretch occupies residues 1–62 (MPTTFTPNSP…PPAYVPPPPP (62 aa)). Residues 37–50 (AAAAATNSVLSAPS) show a composition bias toward low complexity. The segment covering 51 to 62 (SVPPAYVPPPPP) has biased composition (pro residues). Fe cation-binding residues include His-305, His-354, His-419, and His-600.

The protein belongs to the carotenoid oxygenase family. Fe(2+) serves as cofactor.

Its subcellular location is the plastid. The protein resides in the chloroplast. The enzyme catalyses a 9-cis-epoxycarotenoid + O2 = a 12'-apo-carotenal + 2-cis,4-trans-xanthoxin. The catalysed reaction is 9-cis-violaxanthin + O2 = (3S,5R,6S)-5,6-epoxy-3-hydroxy-5,6-dihydro-12'-apo-beta-caroten-12'-al + 2-cis,4-trans-xanthoxin. It carries out the reaction 9'-cis-neoxanthin + O2 = (3S,5R,6R)-3,5-dihydroxy-6,7-didehydro-5,6-dihydro-12'-apo-beta-caroten-12'-al + 2-cis,4-trans-xanthoxin. Has a 11,12(11',12') 9-cis epoxycarotenoid cleavage activity. Catalyzes the first step of abscisic-acid biosynthesis from carotenoids. In Oryza sativa subsp. japonica (Rice), this protein is 9-cis-epoxycarotenoid dioxygenase NCED5, chloroplastic.